Here is a 196-residue protein sequence, read N- to C-terminus: MYRKSIMQESRDIQLAMELIALGARLPILENETCLSRSRLLRLYKEVKGTPAPKGLLPFSADWFLSWEQNIHSSAFYNAYLCLIRVGNIPTIEAMIKAYRLYLELCPQRQDGGPLLGLTRAWILLRFIDSQLLGQTRCKLCGGAFITYAFHPPHNFVCSFCHPPSRAVKKRKLSHAAADNRIYNLRQRNMCNVKPC.

Residues Cys138, Cys141, Cys158, and Cys161 each coordinate Zn(2+).

This sequence belongs to the FlhC family. In terms of assembly, heterohexamer composed of two FlhC and four FlhD subunits. Each FlhC binds a FlhD dimer, forming a heterotrimer, and a hexamer assembles by dimerization of two heterotrimers. It depends on Zn(2+) as a cofactor.

It localises to the cytoplasm. Functions in complex with FlhD as a master transcriptional regulator that regulates transcription of several flagellar and non-flagellar operons by binding to their promoter region. Activates expression of class 2 flagellar genes, including fliA, which is a flagellum-specific sigma factor that turns on the class 3 genes. Also regulates genes whose products function in a variety of physiological pathways. The chain is Flagellar transcriptional regulator FlhC from Sodalis glossinidius (strain morsitans).